We begin with the raw amino-acid sequence, 31 residues long: Photosystem II reaction center protein T (31 aa).

A helical transmembrane segment spans residues alanine 3–phenylalanine 23.

The protein belongs to the PsbT family. As to quaternary structure, PSII is composed of 1 copy each of membrane proteins PsbA, PsbB, PsbC, PsbD, PsbE, PsbF, PsbH, PsbI, PsbJ, PsbK, PsbL, PsbM, PsbT, PsbY, PsbZ, Psb30/Ycf12, at least 3 peripheral proteins of the oxygen-evolving complex and a large number of cofactors. It forms dimeric complexes.

It is found in the plastid. The protein localises to the chloroplast thylakoid membrane. In terms of biological role, found at the monomer-monomer interface of the photosystem II (PS II) dimer, plays a role in assembly and dimerization of PSII. PSII is a light-driven water plastoquinone oxidoreductase, using light energy to abstract electrons from H(2)O, generating a proton gradient subsequently used for ATP formation. This is Photosystem II reaction center protein T from Mesostigma viride (Green alga).